The primary structure comprises 647 residues: DNA mismatch repair protein MutL (647 aa).

The protein belongs to the DNA mismatch repair MutL/HexB family.

This protein is involved in the repair of mismatches in DNA. It is required for dam-dependent methyl-directed DNA mismatch repair. May act as a 'molecular matchmaker', a protein that promotes the formation of a stable complex between two or more DNA-binding proteins in an ATP-dependent manner without itself being part of a final effector complex. The protein is DNA mismatch repair protein MutL of Bacillus thuringiensis (strain Al Hakam).